We begin with the raw amino-acid sequence, 194 residues long: Peptidyl-tRNA hydrolase (194 aa).

Tyr-17 provides a ligand contact to tRNA. His-22 functions as the Proton acceptor in the catalytic mechanism. Residues Tyr-68, Asn-70, and Asn-116 each contribute to the tRNA site.

This sequence belongs to the PTH family. Monomer.

The protein resides in the cytoplasm. The enzyme catalyses an N-acyl-L-alpha-aminoacyl-tRNA + H2O = an N-acyl-L-amino acid + a tRNA + H(+). Functionally, hydrolyzes ribosome-free peptidyl-tRNAs (with 1 or more amino acids incorporated), which drop off the ribosome during protein synthesis, or as a result of ribosome stalling. Catalyzes the release of premature peptidyl moieties from peptidyl-tRNA molecules trapped in stalled 50S ribosomal subunits, and thus maintains levels of free tRNAs and 50S ribosomes. The chain is Peptidyl-tRNA hydrolase from Pseudomonas savastanoi pv. phaseolicola (strain 1448A / Race 6) (Pseudomonas syringae pv. phaseolicola (strain 1448A / Race 6)).